The following is a 325-amino-acid chain: Tagatose 1,6-diphosphate aldolase 1 (325 aa).

The protein belongs to the aldolase LacD family.

The catalysed reaction is D-tagatofuranose 1,6-bisphosphate = D-glyceraldehyde 3-phosphate + dihydroxyacetone phosphate. It functions in the pathway carbohydrate metabolism; D-tagatose 6-phosphate degradation; D-glyceraldehyde 3-phosphate and glycerone phosphate from D-tagatose 6-phosphate: step 2/2. This chain is Tagatose 1,6-diphosphate aldolase 1 (lacD1), found in Streptococcus pyogenes serotype M3 (strain ATCC BAA-595 / MGAS315).